We begin with the raw amino-acid sequence, 420 residues long: Riboflavin biosynthesis protein RibBA (420 aa).

Residues 1–202 (MTTFGTIEQA…IADLVAYRRR (202 aa)) are DHBP synthase. D-ribulose 5-phosphate contacts are provided by residues 28 to 29 (RE), aspartate 33, 141 to 145 (RPGHT), and glutamate 165. Glutamate 29 serves as a coordination point for Mg(2+). Histidine 144 contacts Mg(2+). Residues 203 to 420 (TEKQVELVAE…RAVVGDGIGA (218 aa)) are GTP cyclohydrolase II. A GTP-binding site is contributed by 253–257 (RVHSE). Residues cysteine 258, cysteine 269, and cysteine 271 each contribute to the Zn(2+) site. Residues glutamine 274, 297–299 (EGR), and threonine 319 each bind GTP. Aspartate 331 functions as the Proton acceptor; for GTP cyclohydrolase activity in the catalytic mechanism. Arginine 333 functions as the Nucleophile; for GTP cyclohydrolase activity in the catalytic mechanism. GTP is bound by residues threonine 354 and lysine 359.

It in the N-terminal section; belongs to the DHBP synthase family. The protein in the C-terminal section; belongs to the GTP cyclohydrolase II family. The cofactor is Mg(2+). Requires Mn(2+) as cofactor. Zn(2+) serves as cofactor.

It carries out the reaction D-ribulose 5-phosphate = (2S)-2-hydroxy-3-oxobutyl phosphate + formate + H(+). The catalysed reaction is GTP + 4 H2O = 2,5-diamino-6-hydroxy-4-(5-phosphoribosylamino)-pyrimidine + formate + 2 phosphate + 3 H(+). The protein operates within cofactor biosynthesis; riboflavin biosynthesis; 2-hydroxy-3-oxobutyl phosphate from D-ribulose 5-phosphate: step 1/1. It functions in the pathway cofactor biosynthesis; riboflavin biosynthesis; 5-amino-6-(D-ribitylamino)uracil from GTP: step 1/4. Catalyzes the conversion of D-ribulose 5-phosphate to formate and 3,4-dihydroxy-2-butanone 4-phosphate. Functionally, catalyzes the conversion of GTP to 2,5-diamino-6-ribosylamino-4(3H)-pyrimidinone 5'-phosphate (DARP), formate and pyrophosphate. This is Riboflavin biosynthesis protein RibBA from Salinispora arenicola (strain CNS-205).